The following is a 43-amino-acid chain: Protein PsbN (43 aa).

Residues 7-27 (LSIGIAVVVIAVTGFSIYTAF) form a helical membrane-spanning segment.

This sequence belongs to the PsbN family.

The protein localises to the cellular thylakoid membrane. Functionally, may play a role in photosystem I and II biogenesis. The chain is Protein PsbN from Picosynechococcus sp. (strain ATCC 27264 / PCC 7002 / PR-6) (Agmenellum quadruplicatum).